The following is a 220-amino-acid chain: Carbonic anhydrase (220 aa).

Zn(2+)-binding residues include Cys-39, Asp-41, His-98, and Cys-101.

It belongs to the beta-class carbonic anhydrase family. Zn(2+) is required as a cofactor.

The enzyme catalyses hydrogencarbonate + H(+) = CO2 + H2O. The protein is Carbonic anhydrase (cynT) of Pseudomonas aeruginosa (strain ATCC 15692 / DSM 22644 / CIP 104116 / JCM 14847 / LMG 12228 / 1C / PRS 101 / PAO1).